A 147-amino-acid chain; its full sequence is Hemoglobin subunit gamma (147 aa).

One can recognise a Globin domain in the interval 3 to 147 (NFTAEDKAAI…VASALASRYH (145 aa)). Residues His64 and His93 each contribute to the heme b site.

The protein belongs to the globin family. In terms of assembly, heterotetramer of two alpha chains and two gamma chains in fetal hemoglobin (Hb F). Red blood cells.

Its function is as follows. Gamma chains make up the fetal hemoglobin F, in combination with alpha chains. In Alouatta belzebul (Red-handed howler monkey), this protein is Hemoglobin subunit gamma (HBG).